The following is a 577-amino-acid chain: Zona pellucida sperm-binding protein 3 receptor (577 aa).

The first 32 residues, 1-32, serve as a signal peptide directing secretion; that stretch reads MTAWSLHELWKTSHSTLFQVTLATVLMAPVLG. Sushi domains lie at 33–92, 93–154, 155–219, 220–279, 280–346, and 347–412; these read DCGP…FCAR, KRCK…ECVI, ATCE…ACEK, IVCH…TCEP, NGCI…GCER, and VCCP…SCEA. Intrachain disulfides connect Cys34/Cys78, Cys64/Cys90, Cys95/Cys136, Cys122/Cys152, Cys157/Cys200, Cys186/Cys217, Cys222/Cys264, Cys250/Cys277, Cys282/Cys332, Cys316/Cys344, Cys349/Cys397, and Cys382/Cys410. N-linked (GlcNAc...) asparagine glycans are attached at residues Asn72 and Asn81. N-linked (GlcNAc...) asparagine glycosylation is found at Asn144, Asn195, and Asn204. Residue Asn335 is glycosylated (N-linked (GlcNAc...) asparagine). N-linked (GlcNAc...) asparagine glycans are attached at residues Asn426, Asn431, Asn434, Asn443, Asn462, Asn475, and Asn497. The Sushi 7 domain maps to 451–509; that stretch reads AVCPKPEIINGNLSVEKEIYAEMENITIQCDSGYDLVGSSNIICLENRTWYPDIPFCIM. Disulfide bonds link Cys453/Cys494 and Cys480/Cys507.

As to quaternary structure, homomultimer; disulfide-linked. In terms of processing, glycosylated. Testis specific.

It localises to the cytoplasmic vesicle. Its subcellular location is the secretory vesicle. It is found in the acrosome lumen. Functionally, binds to ZP3 glycoprotein in egg zona pellucida. Probably involved in interactions between sperm acrosome and egg zona pellucida during and immediately following the acrosome reaction. In Rattus norvegicus (Rat), this protein is Zona pellucida sperm-binding protein 3 receptor (Zp3r).